The chain runs to 576 residues: RING finger and SPRY domain-containing protein 1 (576 aa).

An N-terminal signal peptide occupies residues 1–16; the sequence is MIVLGWAVFLASRSLG. Residue serine 50 is modified to Phosphoserine. Residues 50-99 form a disordered region; sequence SGTDDSVDTQQQQAENSAVPTADTRSQPRDPVRPPRRGRGPHEPRRKKQN. Residues 57 to 68 show a composition bias toward polar residues; that stretch reads DTQQQQAENSAV. Positions 83–97 are enriched in basic residues; that stretch reads PPRRGRGPHEPRRKK. Residues 300–483 enclose the B30.2/SPRY domain; sequence LFLKEGRQLT…CEFNFGAKPF (184 aa). Asparagine 314 carries N-linked (GlcNAc...) asparagine glycosylation. The RING-type zinc finger occupies 527–562; that stretch reads CSLCCDEVADTQLKPCGHSDLCMDCALQLETCPLCR.

It localises to the secreted. In Macaca fascicularis (Crab-eating macaque), this protein is RING finger and SPRY domain-containing protein 1 (RSPRY1).